The following is a 70-amino-acid chain: Protein SlyX homolog (70 aa).

The protein belongs to the SlyX family.

This chain is Protein SlyX homolog, found in Shewanella denitrificans (strain OS217 / ATCC BAA-1090 / DSM 15013).